Reading from the N-terminus, the 153-residue chain is Transcriptional repressor NrdR (153 aa).

A zinc finger lies at 3–34 (CPSCSHNGTRVLDSRPVDEGRSIRRRRECESC). The 91-residue stretch at 49-139 (LIVVKKEGTR…VYRQFKDLNV (91 aa)) folds into the ATP-cone domain.

This sequence belongs to the NrdR family. It depends on Zn(2+) as a cofactor.

Its function is as follows. Negatively regulates transcription of bacterial ribonucleotide reductase nrd genes and operons by binding to NrdR-boxes. The protein is Transcriptional repressor NrdR of Bacillus anthracis (strain A0248).